Here is a 489-residue protein sequence, read N- to C-terminus: Serine/arginine-rich splicing factor 4 (489 aa).

Positions 2 to 72 (PRVYIGRLSY…ERVIVEHARG (71 aa)) constitute an RRM 1 domain. Disordered regions lie at residues 72–95 (GPRR…GRDK) and 169–489 (KIRL…HSRS). Phosphoserine occurs at positions 78 and 84. The RRM 2 domain maps to 104–177 (YRLIVENLSS…RKIRLVEDKP (74 aa)). Basic residues-rich tracts occupy residues 179–206 (SRRR…KSRS) and 214–246 (SHSK…KKEK). Residues 247–279 (SRSPSKDNKSRSRSRSPDKSRSKSKDHAEDKLQ) show a composition bias toward basic and acidic residues. Phosphoserine occurs at positions 289, 291, and 293. Over residues 293 to 332 (SRHDSKSRSRSQERRAEEERRRSVSRARSQEKSRSQEKSL) the composition is skewed to basic and acidic residues. Over residues 333-356 (LKSRSRSRSRSRSRSKDKRKGRKR) the composition is skewed to basic residues. Basic and acidic residues-rich tracts occupy residues 357–370 (SRDE…SKSE) and 394–426 (KDTD…RAEG). 3 positions are modified to phosphoserine: Ser441, Ser453, and Ser455. Composition is skewed to basic residues over residues 456 to 469 (RSKS…RSKS) and 479 to 489 (SRSRSRSHSRS).

This sequence belongs to the splicing factor SR family. As to quaternary structure, found in a pre-mRNA splicing complex with SRSF4/SFRS4, SRSF5/SFRS5, SNRNP70, SNRPA1, SRRM1 and SRRM2. Interacts with PNN. Post-translationally, extensively phosphorylated on serine residues in the RS domain.

The protein localises to the nucleus speckle. In terms of biological role, plays a role in alternative splice site selection during pre-mRNA splicing. Represses the splicing of MAPT/Tau exon 10. The chain is Serine/arginine-rich splicing factor 4 (Srsf4) from Mus musculus (Mouse).